Here is a 240-residue protein sequence, read N- to C-terminus: Keratinocyte-associated protein 3 (240 aa).

Transmembrane regions (helical) follow at residues 21-41 (VGLALILVGHVNLLVGAVLHG), 63-83 (VISVGSGLLSVSVGLVALLAS), 95-115 (LLTLALVNLLLSAACSMGLLL), and 163-183 (ALALWIPSLFMSAAEAALSGY).

This sequence belongs to the TMEM54 family.

Its subcellular location is the membrane. In Mus musculus (Mouse), this protein is Keratinocyte-associated protein 3 (Krtcap3).